The sequence spans 494 residues: Guanosine-5'-triphosphate,3'-diphosphate pyrophosphatase (494 aa).

Belongs to the GppA/Ppx family. GppA subfamily.

It catalyses the reaction guanosine 3'-diphosphate 5'-triphosphate + H2O = guanosine 3',5'-bis(diphosphate) + phosphate + H(+). The protein operates within purine metabolism; ppGpp biosynthesis; ppGpp from GTP: step 2/2. In terms of biological role, catalyzes the conversion of pppGpp to ppGpp. Guanosine pentaphosphate (pppGpp) is a cytoplasmic signaling molecule which together with ppGpp controls the 'stringent response', an adaptive process that allows bacteria to respond to amino acid starvation, resulting in the coordinated regulation of numerous cellular activities. In Escherichia coli O127:H6 (strain E2348/69 / EPEC), this protein is Guanosine-5'-triphosphate,3'-diphosphate pyrophosphatase.